A 2579-amino-acid chain; its full sequence is Ectopic P granules protein 5 homolog (2579 aa).

2 disordered regions span residues 1 to 46 (MAEA…SREQ) and 92 to 132 (NEES…GTKV). Residues 7-23 (PQRRAKAKASRTKTKEK) show a composition bias toward basic residues. Positions 24-34 (KKYETPQREES) are enriched in basic and acidic residues. T134 carries the post-translational modification Phosphothreonine. Residues 535–564 (PSERKPSSSGPGSGTWTLVDEGGEEDEDPE) form a disordered region. Residues 555 to 564 (EGGEEDEDPE) are compositionally biased toward acidic residues. Residues 1607–1633 (MHKNEAISQQLHVLRKEVKQLQAEAAK) adopt a coiled-coil conformation.

Belongs to the EPG5 family. As to quaternary structure, interacts with RAN.

It is found in the cytoplasm. The protein resides in the perinuclear region. Its subcellular location is the lysosome. In terms of biological role, involved in autophagy. May play a role in a late step of autophagy, such as clearance of autophagosomal cargo. Plays a key role in innate and adaptive immune response triggered by unmethylated cytidine-phosphate-guanosine (CpG) dinucleotides from pathogens, and mediated by the nucleotide-sensing receptor TLR9. It is necessary for the translocation of CpG dinucleotides from early endosomes to late endosomes and lysosomes, where TLR9 is located. The protein is Ectopic P granules protein 5 homolog (EPG5) of Homo sapiens (Human).